Here is a 315-residue protein sequence, read N- to C-terminus: D-erythronate dehydrogenase (315 aa).

NAD(+) is bound by residues Ser-119, Tyr-143, and Lys-147. The active-site Proton acceptor is Tyr-143.

It belongs to the NAD(P)-dependent epimerase/dehydratase family.

It catalyses the reaction D-erythronate + NAD(+) = 2-dehydro-D-erythronate + NADH + H(+). Its function is as follows. Catalyzes oxidation of D-erythronate to 2-oxo-tetronate. Can use either NAD(+) or NADP(+) as cosubstrate, with a preference for NAD(+). This chain is D-erythronate dehydrogenase, found in Haemophilus influenzae (strain ATCC 51907 / DSM 11121 / KW20 / Rd).